Consider the following 778-residue polypeptide: uncharacterized protein (778 aa).

The region spanning 1-92 (MSFVIAVPEA…GARSYVVAEA (92 aa)) is the PE domain. 3 disordered regions span residues 125–163 (ADGTGAPGGPGGLLLGNGGNGGSGAPGQPGGAGGDAGLI), 372–510 (TGLA…GDAF), and 718–778 (QGGL…GADG). Composition is skewed to gly residues over residues 402–429 (NQTGGNGGPGPAGGVGEAGGVGGQGGLG), 436–510 (DGTG…GDAF), and 718–763 (QGGL…GSSG).

Belongs to the mycobacterial PE family. PGRS subfamily.

This is an uncharacterized protein from Mycobacterium tuberculosis (strain CDC 1551 / Oshkosh).